A 1757-amino-acid polypeptide reads, in one-letter code: Serine/threonine-protein kinase WNK3 (1757 aa).

The disordered stretch occupies residues Met-1 to Arg-25. Ser-62 carries the phosphoserine modification. Over residues Thr-66–Ala-82 the composition is skewed to basic and acidic residues. Residues Thr-66–Asn-85 are disordered. In terms of domain architecture, Protein kinase spans Leu-146–Phe-404. ATP is bound by residues Thr-226–Met-229 and Lys-276. The Proton acceptor role is filled by Asp-293. Ser-303 and Ser-307 each carry phosphoserine; by autocatalysis. The tract at residues Glu-536–Val-546 is interaction with KLHL3. Position 540 is a phosphothreonine (Thr-540). 3 stretches are compositionally biased toward polar residues: residues Leu-551–Pro-570, Ser-578–Gln-604, and Ser-674–Gly-689. Disordered stretches follow at residues Leu-551–Gln-604 and Ser-674–Glu-705. Phosphoserine is present on Ser-1039. Residues Val-1404–Ser-1422 are compositionally biased toward polar residues. 3 disordered regions span residues Val-1404–Thr-1440, Ser-1479–Asp-1498, and Ala-1536–Ser-1574. A compositionally biased stretch (low complexity) spans Ser-1479 to Asp-1491. A phosphoserine mark is found at Ser-1550 and Ser-1553. Residues Arg-1555–Ser-1566 show a composition bias toward basic residues. Position 1595 is a phosphoserine (Ser-1595). Disordered stretches follow at residues His-1621–Thr-1650 and Pro-1734–Lys-1757. Residues Ser-1624 to Lys-1637 are compositionally biased toward low complexity. Over residues Glu-1641–Thr-1650 the composition is skewed to polar residues. The segment covering Pro-1742–Lys-1757 has biased composition (pro residues).

This sequence belongs to the protein kinase superfamily. Ser/Thr protein kinase family. WNK subfamily. As to quaternary structure, interacts with WNK1 and WNK4. It depends on Mg(2+) as a cofactor. Autophosphorylated at Ser-303 and Ser-307, promoting its activity. Phosphorylation at Thr-540 prevents interaction with KLHL3 and subsequent ubiquitination and degradation by the BCR(KLHL3) complex. Post-translationally, ubiquitinated by the BCR(KLHL2) complex, leading to its degradation. Ubiquitinated by the BCR(KLHL3) complex, leading to its degradation. Expressed in pancreatic duct.

The protein resides in the cytoplasm. It catalyses the reaction L-seryl-[protein] + ATP = O-phospho-L-seryl-[protein] + ADP + H(+). It carries out the reaction L-threonyl-[protein] + ATP = O-phospho-L-threonyl-[protein] + ADP + H(+). Its activity is regulated as follows. Activated in response to hyperosmotic stress: cell shrinkage promotes formation of a membraneless compartment that concentrates WNK3 with its substrates, OXSR1/OSR1 and STK39/SPAK. Activation requires autophosphorylation of Ser-307 and, to a lower extent, Ser-303. Autophosphorylation and subsequent activation is inhibited by increases in intracellular ionic strength: Cl(-) potently inhibits WNK3 kinase activity via direct binding. Also inhibited by K(+) ions. Kinase activity is inhibited by WNK4. In terms of biological role, serine/threonine-protein kinase component of the WNK3-SPAK/OSR1 kinase cascade, which plays an important role in the regulation of electrolyte homeostasis and regulatory volume increase in response to hyperosmotic stress. WNK3 mediates regulatory volume increase in response to hyperosmotic stress by acting as a molecular crowding sensor, which senses cell shrinkage and mediates formation of a membraneless compartment by undergoing liquid-liquid phase separation. The membraneless compartment concentrates WNK3 with its substrates, OXSR1/OSR1 and STK39/SPAK, promoting WNK3-dependent phosphorylation and activation of downstream kinases OXSR1/OSR1 and STK39/SPAK. Following activation, OXSR1/OSR1 and STK39/SPAK catalyze phosphorylation of ion cotransporters SLC12A1/NKCC2, SLC12A2/NKCC1, SLC12A3/NCC, SLC12A4/KCC1, SLC12A5/KCC2 or SLC12A6/KCC3, regulating their activity. Phosphorylation of Na-K-Cl cotransporters SLC12A2/NKCC1 and SLC12A2/NKCC1 promote their activation and ion influx; simultaneously, phosphorylation of K-Cl cotransporters SLC12A4/KCC1, SLC12A5/KCC2 and SLC12A6/KCC3 inhibits its activity, blocking ion efflux. Phosphorylates WNK4, possibly regulating the activity of SLC12A3/NCC. May also phosphorylate NEDD4L. Also acts as a scaffold protein independently of its protein kinase activity: negatively regulates cell membrane localization of various transporters and channels, such as KCNJ1 and SLC26A9. Increases Ca(2+) influx mediated by TRPV5 and TRPV6 by enhancing their membrane expression level via a kinase-dependent pathway. This Mus musculus (Mouse) protein is Serine/threonine-protein kinase WNK3.